Consider the following 610-residue polypeptide: Aspartate--tRNA(Asp/Asn) ligase (610 aa).

Glu-196 serves as a coordination point for L-aspartate. The aspartate stretch occupies residues 220–223; it reads QIFK. Residue Arg-242 coordinates L-aspartate. Residues 242–244 and Gln-251 each bind ATP; that span reads RDE. His-465 contributes to the L-aspartate binding site. Glu-499 contributes to the ATP binding site. Arg-506 is a binding site for L-aspartate. 551–554 contributes to the ATP binding site; the sequence is GMDR.

The protein belongs to the class-II aminoacyl-tRNA synthetase family. Type 1 subfamily. In terms of assembly, homodimer.

Its subcellular location is the cytoplasm. The enzyme catalyses tRNA(Asx) + L-aspartate + ATP = L-aspartyl-tRNA(Asx) + AMP + diphosphate. In terms of biological role, aspartyl-tRNA synthetase with relaxed tRNA specificity since it is able to aspartylate not only its cognate tRNA(Asp) but also tRNA(Asn). Reaction proceeds in two steps: L-aspartate is first activated by ATP to form Asp-AMP and then transferred to the acceptor end of tRNA(Asp/Asn). This Nitratidesulfovibrio vulgaris (strain ATCC 29579 / DSM 644 / CCUG 34227 / NCIMB 8303 / VKM B-1760 / Hildenborough) (Desulfovibrio vulgaris) protein is Aspartate--tRNA(Asp/Asn) ligase.